Reading from the N-terminus, the 103-residue chain is Large ribosomal subunit protein bL21 (103 aa).

It belongs to the bacterial ribosomal protein bL21 family. In terms of assembly, part of the 50S ribosomal subunit. Contacts protein L20.

Its function is as follows. This protein binds to 23S rRNA in the presence of protein L20. In Clostridioides difficile (strain 630) (Peptoclostridium difficile), this protein is Large ribosomal subunit protein bL21.